We begin with the raw amino-acid sequence, 178 residues long: N-alpha-acetyltransferase 20 (178 aa).

The N-acetyltransferase domain maps to 2–157 (TTLRAFTCDD…DAYDMRKALS (156 aa)).

It belongs to the acetyltransferase family. ARD1 subfamily. In terms of assembly, component of the N-terminal acetyltransferase B (NatB) complex which is composed of naa20 and naa25.

Its subcellular location is the cytoplasm. The protein localises to the nucleus. The catalysed reaction is N-terminal L-methionyl-L-asparaginyl-[protein] + acetyl-CoA = N-terminal N(alpha)-acetyl-L-methionyl-L-asparaginyl-[protein] + CoA + H(+). It carries out the reaction N-terminal L-methionyl-L-glutaminyl-[protein] + acetyl-CoA = N-terminal N(alpha)-acetyl-L-methionyl-L-glutaminyl-[protein] + CoA + H(+). The enzyme catalyses N-terminal L-methionyl-L-aspartyl-[protein] + acetyl-CoA = N-terminal N(alpha)-acetyl-L-methionyl-L-aspartyl-[protein] + CoA + H(+). It catalyses the reaction N-terminal L-methionyl-L-glutamyl-[protein] + acetyl-CoA = N-terminal N(alpha)-acetyl-L-methionyl-L-glutamyl-[protein] + CoA + H(+). Functionally, catalytic subunit of the NatB complex which catalyzes acetylation of the N-terminal methionine residues of peptides beginning with Met-Asp, Met-Glu, Met-Asn and Met-Gln. Proteins with cell cycle functions are overrepresented in the pool of NatB substrates. Required for maintaining the structure and function of actomyosin fibers and for proper cellular migration. The chain is N-alpha-acetyltransferase 20 (naa20) from Danio rerio (Zebrafish).